The primary structure comprises 264 residues: Probable aquaporin TIP3-1 (264 aa).

2 consecutive transmembrane segments (helical) span residues 28–48 (AAIS…GSIL) and 62–82 (GLVA…AVAV). Residues 90–92 (NPA) carry the NPA 1 motif. 3 consecutive transmembrane segments (helical) span residues 105 to 125 (LIRA…ATLL), 149 to 169 (AVLL…ATVI), and 176 to 196 (VGTI…LAGG). The short motif at 204–206 (NPA) is the NPA 2 element. The chain crosses the membrane as a helical span at residues 224–244 (YWLGPFVGAGLAGLLYEYLVI).

It belongs to the MIP/aquaporin (TC 1.A.8) family. TIP (TC 1.A.8.10) subfamily. As to expression, expressed in leaves and at lower levels in roots.

The protein localises to the vacuole membrane. Aquaporins facilitate the transport of water and small neutral solutes across cell membranes. May be involved in transport from the vacuolar compartment to the cytoplasm. This chain is Probable aquaporin TIP3-1 (TIP3-1), found in Oryza sativa subsp. japonica (Rice).